A 445-amino-acid chain; its full sequence is Exodeoxyribonuclease 7 large subunit (445 aa).

The protein belongs to the XseA family. Heterooligomer composed of large and small subunits.

It localises to the cytoplasm. It carries out the reaction Exonucleolytic cleavage in either 5'- to 3'- or 3'- to 5'-direction to yield nucleoside 5'-phosphates.. Functionally, bidirectionally degrades single-stranded DNA into large acid-insoluble oligonucleotides, which are then degraded further into small acid-soluble oligonucleotides. This chain is Exodeoxyribonuclease 7 large subunit, found in Geotalea daltonii (strain DSM 22248 / JCM 15807 / FRC-32) (Geobacter daltonii).